The chain runs to 166 residues: NAD(P)H-quinone oxidoreductase subunit I, chloroplastic (166 aa).

4Fe-4S ferredoxin-type domains lie at Gly55 to Lys84 and Leu95 to Glu124. [4Fe-4S] cluster is bound by residues Cys64, Cys67, Cys70, Cys74, Cys104, Cys107, Cys110, and Cys114.

The protein belongs to the complex I 23 kDa subunit family. NDH is composed of at least 16 different subunits, 5 of which are encoded in the nucleus. Requires [4Fe-4S] cluster as cofactor.

It is found in the plastid. The protein resides in the chloroplast thylakoid membrane. It catalyses the reaction a plastoquinone + NADH + (n+1) H(+)(in) = a plastoquinol + NAD(+) + n H(+)(out). The catalysed reaction is a plastoquinone + NADPH + (n+1) H(+)(in) = a plastoquinol + NADP(+) + n H(+)(out). Its function is as follows. NDH shuttles electrons from NAD(P)H:plastoquinone, via FMN and iron-sulfur (Fe-S) centers, to quinones in the photosynthetic chain and possibly in a chloroplast respiratory chain. The immediate electron acceptor for the enzyme in this species is believed to be plastoquinone. Couples the redox reaction to proton translocation, and thus conserves the redox energy in a proton gradient. The protein is NAD(P)H-quinone oxidoreductase subunit I, chloroplastic of Enydra sessilis (Smallray swampwort).